A 340-amino-acid chain; its full sequence is GTPase Obg (340 aa).

The Obg domain maps to 1 to 159; the sequence is MGFIDEVKLC…KHVLLKLKVL (159 aa). Residues 160-329 form the OBG-type G domain; it reads SDVGIIGMPN…LSEKLKKSNS (170 aa). GTP is bound by residues 166 to 173, 191 to 195, 212 to 215, 279 to 282, and 310 to 312; these read GMPNAGKS, FTTVR, DIPG, NKCD, and NGD. The Mg(2+) site is built by serine 173 and threonine 193.

The protein belongs to the TRAFAC class OBG-HflX-like GTPase superfamily. OBG GTPase family. As to quaternary structure, monomer. Mg(2+) serves as cofactor.

Its subcellular location is the cytoplasm. An essential GTPase which binds GTP, GDP and possibly (p)ppGpp with moderate affinity, with high nucleotide exchange rates and a fairly low GTP hydrolysis rate. Plays a role in control of the cell cycle, stress response, ribosome biogenesis and in those bacteria that undergo differentiation, in morphogenesis control. The polypeptide is GTPase Obg (Wolbachia pipientis wMel).